The chain runs to 472 residues: Aspartyl/glutamyl-tRNA(Asn/Gln) amidotransferase subunit B (472 aa).

It belongs to the GatB/GatE family. GatB subfamily. In terms of assembly, heterotrimer of A, B and C subunits.

It carries out the reaction L-glutamyl-tRNA(Gln) + L-glutamine + ATP + H2O = L-glutaminyl-tRNA(Gln) + L-glutamate + ADP + phosphate + H(+). It catalyses the reaction L-aspartyl-tRNA(Asn) + L-glutamine + ATP + H2O = L-asparaginyl-tRNA(Asn) + L-glutamate + ADP + phosphate + 2 H(+). Functionally, allows the formation of correctly charged Asn-tRNA(Asn) or Gln-tRNA(Gln) through the transamidation of misacylated Asp-tRNA(Asn) or Glu-tRNA(Gln) in organisms which lack either or both of asparaginyl-tRNA or glutaminyl-tRNA synthetases. The reaction takes place in the presence of glutamine and ATP through an activated phospho-Asp-tRNA(Asn) or phospho-Glu-tRNA(Gln). The protein is Aspartyl/glutamyl-tRNA(Asn/Gln) amidotransferase subunit B of Mycoplasmopsis agalactiae (strain NCTC 10123 / CIP 59.7 / PG2) (Mycoplasma agalactiae).